A 289-amino-acid polypeptide reads, in one-letter code: UPF0761 membrane protein ESA_04062 (289 aa).

Transmembrane regions (helical) follow at residues 44-64 (LLSLVPFVAVIFALFAAFPMF), 104-124 (VGALGLIVTSLLLMYAIDSAL), 140-160 (FAVYWMILTLGPLLAGASLVI), 183-203 (IFPLLLSWLSFWLLYSVVPTT), 215-235 (LVAALLFELGKKGFALYITMF), and 244-264 (VLAVIPILFLWVYWTWCIVLL).

Belongs to the UPF0761 family.

It localises to the cell inner membrane. This chain is UPF0761 membrane protein ESA_04062, found in Cronobacter sakazakii (strain ATCC BAA-894) (Enterobacter sakazakii).